We begin with the raw amino-acid sequence, 239 residues long: Fatty acid metabolism regulator protein (239 aa).

The region spanning 6 to 74 (QSPAGFAEEY…HGKPTKVNNF (69 aa)) is the HTH gntR-type domain. The H-T-H motif DNA-binding region spans 34–53 (ERELSELIGVTRTTLREVLQ).

As to quaternary structure, homodimer.

It localises to the cytoplasm. Functionally, multifunctional regulator of fatty acid metabolism. The sequence is that of Fatty acid metabolism regulator protein from Enterobacter sp. (strain 638).